We begin with the raw amino-acid sequence, 128 residues long: MGAEYGCLPSTSQALYVILLIVLVRMSLVFVQFPKYLRCYRCLLETKELGCLLGSDICLAPPGSSCMTLLIKNSSSGSDIMVSDCRHKEQMSDCSYTRSSPVFGFWIFSRCCLREFCNNPQNRVFYIP.

The N-terminal stretch at 1 to 29 (MGAEYGCLPSTSQALYVILLIVLVRMSLV) is a signal peptide. In terms of domain architecture, UPAR/Ly6 spans 37–128 (LRCYRCLLET…NPQNRVFYIP (92 aa)). Intrachain disulfides connect cysteine 39–cysteine 66, cysteine 42–cysteine 51, cysteine 58–cysteine 85, cysteine 94–cysteine 111, and cysteine 112–cysteine 117. Residue asparagine 73 is glycosylated (N-linked (GlcNAc...) asparagine).

In terms of assembly, forms oligomers. Post-translationally, N-glycosylated. As to expression, abundantly expressed in the epididymis.

It is found in the secreted. In terms of biological role, may have a role in hematopoietic cell differentiation. This is Lymphocyte antigen 6 complex locus protein G5c (LY6G5C) from Canis lupus familiaris (Dog).